The sequence spans 164 residues: MSVVTGGGEAAGGGGGGGARVFFQSPRGGTGGSPGSSSSSGSSREDSAPVTTVAAAGQVQQQQRRHQQGKVTVKYDRKELRKRLVLEEWIVEQLGQLYGCEEEEMPDVEIDIDDLLDANSEEERASKLQEALVDCYKPTEEFIRELLSRIRGMRKLSPPQKKSV.

Residues M1 to A19 are compositionally biased toward gly residues. The disordered stretch occupies residues M1 to K70. S2 carries the post-translational modification N-acetylserine. S25 carries the post-translational modification Phosphoserine. R27 carries the omega-N-methylarginine modification. Phosphoserine is present on S33. A compositionally biased stretch (low complexity) spans V50–Q62. T72 carries the phosphothreonine; by ILK1 modification.

This sequence belongs to the PP1 inhibitor family. Post-translationally, the main inhibitory site appears to be Thr-72. Has over 600-fold higher inhibitory activity when phosphorylated, creating a molecular switch for regulating the phosphorylation status of PPP1CA substrates and smooth muscle contraction. In terms of tissue distribution, detected in heart, muscle, spinal cord, hippocampus, hypothalamus, thalamus, midbrain, brain stem, cerebellum, brain cortex and olfactory bulb.

It is found in the endomembrane system. Inhibitor of the PP1 regulatory subunit PPP1CA. The sequence is that of Protein phosphatase 1 regulatory subunit 14C (Ppp1r14c) from Mus musculus (Mouse).